The following is a 59-amino-acid chain: Small ribosomal subunit protein bS21 (59 aa).

The segment at 35–59 (REHYEKPSVKKKKKSEAAKRKKRNF) is disordered. Basic residues predominate over residues 43 to 59 (VKKKKKSEAAKRKKRNF).

Belongs to the bacterial ribosomal protein bS21 family.

The protein is Small ribosomal subunit protein bS21 of Finegoldia magna (strain ATCC 29328 / DSM 20472 / WAL 2508) (Peptostreptococcus magnus).